The sequence spans 286 residues: Acetylglutamate kinase (286 aa).

Substrate-binding positions include 70–71 (GG), R92, and N184.

The protein belongs to the acetylglutamate kinase family. ArgB subfamily.

Its subcellular location is the cytoplasm. The catalysed reaction is N-acetyl-L-glutamate + ATP = N-acetyl-L-glutamyl 5-phosphate + ADP. It participates in amino-acid biosynthesis; L-arginine biosynthesis; N(2)-acetyl-L-ornithine from L-glutamate: step 2/4. Catalyzes the ATP-dependent phosphorylation of N-acetyl-L-glutamate. The sequence is that of Acetylglutamate kinase from Ruegeria sp. (strain TM1040) (Silicibacter sp.).